The sequence spans 783 residues: MNTKILDQLEFNKVKDQFTEYLQTEQAQAELCDLVPMTNPERIQNQFTEIQEMSEIFVEHHGFAIGSLRDISEPLRRLELDADLNIQELIAIKKVLQASADLSRFYADLENVELIALKRLFEKIEAFPSLQGSLQSINDGGFIEHFASPELQNIRRQLKACDDAIRQTLQDILKKSGHMLAENLIASRNGRSVLPVKNTYRNRIAGVVHDISSSGNTVYIEPRAVIQLNEKITQLRADERHEMARILHELSDQLRPHTAAIANNAWILGHMDFIRGKYLYLHDKKAIIPEISDNQTLQLLNVRHPLLINPVANDLRFDEDLTVIVITGPNTGGKTVMLKTLGLAQLMAQSGLPILADKGSRVAIFQEIFADIGDEQSIEQSLSTFSSHMTHIVEILNTADSNSLVLVDELGAGTDPQEGASLAMAILEHLRLSQIKTMATTHYPELKAYGIETQHVENASMEFDTATLRPTYRFMQGVPGRSNAFEIARRLGLNEIIVKEAENLTDTDSDVNRIIEQLEAQTVETQKRLEHIKDVEQENLKFNRAVKKLYNEFSHEYDKELEKAQKEIQEMVDTALAESDSILKNLHDKSQLKPHEVIDAKGKLKKLAAQVDLSKNKVLRKAKKEKAARAPRVGDDIIVTAYGQRGTLTSQAKNGNWEAQVGLIKMSLKADEFTLVRTQAEAQQPKKKQINVVKKAKKTSSDGPRARLDLRGKRYEEAMQELDAFIDQALLNNMSQVEIIHGIGTGVIRDAVTKYLRRHRHVKNFEYAPQSAGGSGCTIATLG.

Residue 328 to 335 (GPNTGGKT) coordinates ATP. Positions 708–783 (LDLRGKRYEE…GSGCTIATLG (76 aa)) constitute a Smr domain.

This sequence belongs to the DNA mismatch repair MutS family. MutS2 subfamily. As to quaternary structure, homodimer. Binds to stalled ribosomes, contacting rRNA.

Endonuclease that is involved in the suppression of homologous recombination and thus may have a key role in the control of bacterial genetic diversity. In terms of biological role, acts as a ribosome collision sensor, splitting the ribosome into its 2 subunits. Detects stalled/collided 70S ribosomes which it binds and splits by an ATP-hydrolysis driven conformational change. Acts upstream of the ribosome quality control system (RQC), a ribosome-associated complex that mediates the extraction of incompletely synthesized nascent chains from stalled ribosomes and their subsequent degradation. Probably generates substrates for RQC. This chain is Endonuclease MutS2, found in Streptococcus thermophilus (strain CNRZ 1066).